The chain runs to 54 residues: Insulin (54 aa).

3 disulfides stabilise this stretch: Cys-7/Cys-39, Cys-19/Cys-52, and Cys-38/Cys-43.

It belongs to the insulin family. Heterodimer of a B chain and an A chain linked by two disulfide bonds.

The protein resides in the secreted. Its function is as follows. Insulin decreases blood glucose concentration. It increases cell permeability to monosaccharides, amino acids and fatty acids. It accelerates glycolysis, the pentose phosphate cycle, and glycogen synthesis in liver. This is Insulin (ins) from Squalus acanthias (Spiny dogfish).